A 122-amino-acid chain; its full sequence is Large ribosomal subunit protein uL14c (122 aa).

The protein belongs to the universal ribosomal protein uL14 family. In terms of assembly, part of the 50S ribosomal subunit.

The protein localises to the plastid. The protein resides in the chloroplast. Binds to 23S rRNA. This chain is Large ribosomal subunit protein uL14c, found in Staurastrum punctulatum (Green alga).